Consider the following 113-residue polypeptide: Cell cycle protein GpsB (113 aa).

Residues 37-63 are a coiled coil; it reads KDYETYATLVKSLRQEIADLKEELTRK. Residues 61–82 form a disordered region; sequence TRKPQVSSAPSPSHPDPIDVAA.

Belongs to the GpsB family. As to quaternary structure, forms polymers through the coiled coil domains. Interacts with PBP1, MreC and EzrA.

It localises to the cytoplasm. Functionally, divisome component that associates with the complex late in its assembly, after the Z-ring is formed, and is dependent on DivIC and PBP2B for its recruitment to the divisome. Together with EzrA, is a key component of the system that regulates PBP1 localization during cell cycle progression. Its main role could be the removal of PBP1 from the cell pole after pole maturation is completed. Also contributes to the recruitment of PBP1 to the division complex. Not essential for septum formation. This chain is Cell cycle protein GpsB, found in Streptococcus pneumoniae (strain ATCC 700669 / Spain 23F-1).